A 664-amino-acid chain; its full sequence is Two-component response regulator ARR2 (664 aa).

The disordered stretch occupies residues 1 to 21 (MVNPGHGRGPDSGTAAGGSNS). Residues 29–144 (RVLVVDDDPT…ALKNIWQHVV (116 aa)) enclose the Response regulatory domain. Position 80 is a 4-aspartylphosphate (D80). The tract at residues 151 to 215 (WNVSEHSGGS…DDKEDSSSLK (65 aa)) is disordered. The span at 165–178 (GGDRDRQQQHREDA) shows a compositional bias: basic and acidic residues. Over residues 180–191 (NNSSSVNEGNGR) the composition is skewed to polar residues. A compositionally biased stretch (acidic residues) spans 200-209 (EVDDQGDDKE). The short motif at 215 to 218 (KKPR) is the Nuclear localization signal element. The myb-like GARP DNA-binding region spans 218–268 (RVVWSVELHQQFVAAVNQLGVDKAVPKKILEMMNVPGLTRENVASHLQKYR). Low complexity predominate over residues 554-567 (AAFSTSEAYSSSST). The disordered stretch occupies residues 554 to 589 (AAFSTSEAYSSSSTQRKRRETDATVVGEHGQNLQSP).

It belongs to the ARR family. Type-B subfamily. As to quaternary structure, binds the target DNA as a monomer. Interacts with histidine-containing phosphotransfer proteins. Two-component system major event consists of a His-to-Asp phosphorelay between a sensor histidine kinase (HK) and a response regulator (RR). In plants, the His-to-Asp phosphorelay involves an additional intermediate named Histidine-containing phosphotransfer protein (HPt). This multistep phosphorelay consists of a His-Asp-His-Asp sequential transfer of a phosphate group between first a His and an Asp of the HK protein, followed by the transfer to a conserved His of the HPt protein and finally the transfer to an Asp in the receiver domain of the RR protein. Phosphorylated in response to cytokinin mediated by AHK3. In terms of tissue distribution, detected in the whole plant. Predominantly expressed in pollen.

The protein resides in the nucleus. Its function is as follows. Transcriptional activator that binds specifically to the DNA sequence 5'-[AG]GATT-3'. Functions as a response regulator involved in His-to-Asp phosphorelay signal transduction system. Phosphorylation of the Asp residue in the receiver domain activates the ability of the protein to promote the transcription of target genes. Could directly activate some type-A response regulators in response to cytokinins. Involved in the expression of nuclear genes for components of mitochondrial complex I. Promotes cytokinin-mediated leaf longevity. Involved in the ethylene signaling pathway in an ETR1-dependent manner and in the cytokinin signaling pathway. In Arabidopsis thaliana (Mouse-ear cress), this protein is Two-component response regulator ARR2 (ARR2).